A 188-amino-acid polypeptide reads, in one-letter code: Probable nicotinate-nucleotide adenylyltransferase (188 aa).

Belongs to the NadD family.

It carries out the reaction nicotinate beta-D-ribonucleotide + ATP + H(+) = deamido-NAD(+) + diphosphate. Its pathway is cofactor biosynthesis; NAD(+) biosynthesis; deamido-NAD(+) from nicotinate D-ribonucleotide: step 1/1. Its function is as follows. Catalyzes the reversible adenylation of nicotinate mononucleotide (NaMN) to nicotinic acid adenine dinucleotide (NaAD). The protein is Probable nicotinate-nucleotide adenylyltransferase of Acholeplasma laidlawii (strain PG-8A).